A 451-amino-acid chain; its full sequence is Phosphoglucosamine mutase (451 aa).

The Phosphoserine intermediate role is filled by Ser-103. Ser-103, Asp-243, Asp-245, and Asp-247 together coordinate Mg(2+). At Ser-103 the chain carries Phosphoserine.

This sequence belongs to the phosphohexose mutase family. Mg(2+) serves as cofactor. Activated by phosphorylation.

The catalysed reaction is alpha-D-glucosamine 1-phosphate = D-glucosamine 6-phosphate. Catalyzes the conversion of glucosamine-6-phosphate to glucosamine-1-phosphate. The polypeptide is Phosphoglucosamine mutase (Lactiplantibacillus plantarum (strain ATCC BAA-793 / NCIMB 8826 / WCFS1) (Lactobacillus plantarum)).